The sequence spans 286 residues: Probable alpha-ketoglutarate-dependent hypophosphite dioxygenase (286 aa).

The protein belongs to the PhyH family.

Required for hypophosphite oxidation. The sequence is that of Probable alpha-ketoglutarate-dependent hypophosphite dioxygenase (htxA) from Stutzerimonas stutzeri (Pseudomonas stutzeri).